The primary structure comprises 372 residues: Ephrin type-A receptor 8 (372 aa).

The Protein kinase domain maps to 2–263; the sequence is IHIEKIIGSG…HVVSVLEALV (262 aa). ATP contacts are provided by residues 8 to 16 and Lys34; that span reads IGSGESGEV. The Proton acceptor role is filled by Asp127. Tyr206 is subject to Phosphotyrosine; by autocatalysis. In terms of domain architecture, SAM spans 297–372; it reads NGDLTVGDWL…SCTQGPRRHL (76 aa). Positions 370–372 match the PDZ-binding motif; the sequence is RHL.

As to quaternary structure, heterotetramer upon binding of the ligand. The heterotetramer is composed of an ephrin dimer and a receptor dimer. Oligomerization is probably required to induce biological responses. May also form heterodimers with other ephrin receptors. Interacts with FYN; possible downstream effector of EPHA8 in regulation of cell adhesion. Interacts with PIK3CG; regulates integrin-mediated cell adhesion to substrate. Interacts with TIAM1; regulates clathrin-mediated endocytosis of EPHA8. Interacts with ANKS1A and ANKS1B; EPHA8 kinase activity-independent but stimulated by EPHA8 ubiquitination. Post-translationally, phosphorylated. Phosphorylation is stimulated upon binding of its ligands including EFNA2, EFNA3 and EFNA5. Autophosphorylation on Tyr-206 modulates tyrosine kinase activity. In terms of processing, ubiquitinated. Ubiquitination by CBL regulates the receptor stability and activity through proteasomal degradation. ANKS1A prevents ubiquitination and degradation. In terms of tissue distribution, most abundant in brain.

It localises to the cell membrane. Its subcellular location is the cell projection. It is found in the early endosome membrane. The enzyme catalyses L-tyrosyl-[protein] + ATP = O-phospho-L-tyrosyl-[protein] + ADP + H(+). Its function is as follows. Receptor tyrosine kinase which binds promiscuously GPI-anchored ephrin-A family ligands residing on adjacent cells, leading to contact-dependent bidirectional signaling into neighboring cells. The signaling pathway downstream of the receptor is referred to as forward signaling while the signaling pathway downstream of the ephrin ligand is referred to as reverse signaling. The GPI-anchored ephrin-A EFNA2, EFNA3, and EFNA5 are able to activate EPHA8 through phosphorylation. With EFNA5 may regulate integrin-mediated cell adhesion and migration on fibronectin substrate but also neurite outgrowth. During development of the nervous system also plays a role in axon guidance. Downstream effectors of the EPHA8 signaling pathway include FYN which promotes cell adhesion upon activation by EPHA8 and the MAP kinases in the stimulation of neurite outgrowth. This chain is Ephrin type-A receptor 8 (Epha8), found in Rattus norvegicus (Rat).